The primary structure comprises 149 residues: SsrA-binding protein (149 aa).

Residues 121-149 form a disordered region; the sequence is GKKQHDKRAAEKDREWQREKQRLVRSAQH. Over residues 127-142 the composition is skewed to basic and acidic residues; it reads KRAAEKDREWQREKQR.

It belongs to the SmpB family.

It is found in the cytoplasm. Required for rescue of stalled ribosomes mediated by trans-translation. Binds to transfer-messenger RNA (tmRNA), required for stable association of tmRNA with ribosomes. tmRNA and SmpB together mimic tRNA shape, replacing the anticodon stem-loop with SmpB. tmRNA is encoded by the ssrA gene; the 2 termini fold to resemble tRNA(Ala) and it encodes a 'tag peptide', a short internal open reading frame. During trans-translation Ala-aminoacylated tmRNA acts like a tRNA, entering the A-site of stalled ribosomes, displacing the stalled mRNA. The ribosome then switches to translate the ORF on the tmRNA; the nascent peptide is terminated with the 'tag peptide' encoded by the tmRNA and targeted for degradation. The ribosome is freed to recommence translation, which seems to be the essential function of trans-translation. This is SsrA-binding protein from Thiobacillus denitrificans (strain ATCC 25259 / T1).